A 364-amino-acid chain; its full sequence is Membrane-bound lytic murein transglycosylase C (364 aa).

The first 19 residues, 1–19 (MNKYKKFLPLLVLIPFLAS), serve as a signal peptide directing secretion. A lipid anchor (N-palmitoyl cysteine) is attached at C20. C20 is lipidated: S-diacylglycerol cysteine.

This sequence belongs to the transglycosylase Slt family.

The protein localises to the cell outer membrane. The enzyme catalyses Exolytic cleavage of the (1-&gt;4)-beta-glycosidic linkage between N-acetylmuramic acid (MurNAc) and N-acetylglucosamine (GlcNAc) residues in peptidoglycan, from either the reducing or the non-reducing ends of the peptidoglycan chains, with concomitant formation of a 1,6-anhydrobond in the MurNAc residue.. Its function is as follows. Murein-degrading enzyme. May play a role in recycling of muropeptides during cell elongation and/or cell division. The protein is Membrane-bound lytic murein transglycosylase C of Glaesserella parasuis serovar 5 (strain SH0165) (Haemophilus parasuis).